The chain runs to 227 residues: Izumo sperm-egg fusion protein 4 (227 aa).

The signal sequence occupies residues 1 to 24 (MFGQGRLGQAMALLLFLGMTAALA). N153 and N214 each carry an N-linked (GlcNAc...) asparagine glycan.

The protein belongs to the Izumo family.

The protein localises to the secreted. The chain is Izumo sperm-egg fusion protein 4 (Izumo4) from Mus musculus (Mouse).